We begin with the raw amino-acid sequence, 485 residues long: Bifunctional protein GlmU (485 aa).

Residues 1–241 (MSASDFSSAV…ARELAGVNDR (241 aa)) form a pyrophosphorylase region. Residues 13-16 (LAAG), Lys-27, Gln-84, and 89-90 (GT) contribute to the UDP-N-acetyl-alpha-D-glucosamine site. Asp-114 contributes to the Mg(2+) binding site. Residues Gly-151, Glu-166, Asn-181, and Asn-239 each coordinate UDP-N-acetyl-alpha-D-glucosamine. Asn-239 lines the Mg(2+) pocket. Residues 242-262 (VQLAEAGAELNRRTVIAAMRG) are linker. Residues 263–485 (GATIVDPATT…AAQNVHNQEG (223 aa)) are N-acetyltransferase. The UDP-N-acetyl-alpha-D-glucosamine site is built by Arg-344 and Lys-362. Catalysis depends on His-374, which acts as the Proton acceptor. UDP-N-acetyl-alpha-D-glucosamine contacts are provided by Tyr-377 and Asn-388. Acetyl-CoA-binding positions include Ala-391, 397-398 (NY), Ser-416, and Ala-434. The tract at residues 465–485 (RPGTAAAQAAEAAQNVHNQEG) is disordered. The segment covering 469-478 (AAAQAAEAAQ) has biased composition (low complexity).

The protein in the N-terminal section; belongs to the N-acetylglucosamine-1-phosphate uridyltransferase family. It in the C-terminal section; belongs to the transferase hexapeptide repeat family. As to quaternary structure, homotrimer. Mg(2+) is required as a cofactor.

Its subcellular location is the cytoplasm. It carries out the reaction alpha-D-glucosamine 1-phosphate + acetyl-CoA = N-acetyl-alpha-D-glucosamine 1-phosphate + CoA + H(+). It catalyses the reaction N-acetyl-alpha-D-glucosamine 1-phosphate + UTP + H(+) = UDP-N-acetyl-alpha-D-glucosamine + diphosphate. It participates in nucleotide-sugar biosynthesis; UDP-N-acetyl-alpha-D-glucosamine biosynthesis; N-acetyl-alpha-D-glucosamine 1-phosphate from alpha-D-glucosamine 6-phosphate (route II): step 2/2. It functions in the pathway nucleotide-sugar biosynthesis; UDP-N-acetyl-alpha-D-glucosamine biosynthesis; UDP-N-acetyl-alpha-D-glucosamine from N-acetyl-alpha-D-glucosamine 1-phosphate: step 1/1. The protein operates within bacterial outer membrane biogenesis; LPS lipid A biosynthesis. Catalyzes the last two sequential reactions in the de novo biosynthetic pathway for UDP-N-acetylglucosamine (UDP-GlcNAc). The C-terminal domain catalyzes the transfer of acetyl group from acetyl coenzyme A to glucosamine-1-phosphate (GlcN-1-P) to produce N-acetylglucosamine-1-phosphate (GlcNAc-1-P), which is converted into UDP-GlcNAc by the transfer of uridine 5-monophosphate (from uridine 5-triphosphate), a reaction catalyzed by the N-terminal domain. This is Bifunctional protein GlmU from Corynebacterium glutamicum (strain R).